The primary structure comprises 211 residues: Protein GrpE (211 aa).

Over residues 1 to 10 (MTDDTKKPGP) the composition is skewed to basic and acidic residues. 2 disordered regions span residues 1-37 (MTDD…PDPV) and 187-211 (AKGG…EKDA). Residues 27–36 (EQAETAEPDP) show a composition bias toward acidic residues. Residues 201–211 (PGTSSLNEKDA) show a composition bias toward polar residues.

Belongs to the GrpE family. As to quaternary structure, homodimer.

It is found in the cytoplasm. Participates actively in the response to hyperosmotic and heat shock by preventing the aggregation of stress-denatured proteins, in association with DnaK and GrpE. It is the nucleotide exchange factor for DnaK and may function as a thermosensor. Unfolded proteins bind initially to DnaJ; upon interaction with the DnaJ-bound protein, DnaK hydrolyzes its bound ATP, resulting in the formation of a stable complex. GrpE releases ADP from DnaK; ATP binding to DnaK triggers the release of the substrate protein, thus completing the reaction cycle. Several rounds of ATP-dependent interactions between DnaJ, DnaK and GrpE are required for fully efficient folding. This chain is Protein GrpE, found in Agrobacterium fabrum (strain C58 / ATCC 33970) (Agrobacterium tumefaciens (strain C58)).